The sequence spans 277 residues: GATA transcription factor 15 (277 aa).

Residues 52–94 form a disordered region; sequence AYDDHSTVTTSPSSPSSSSTGSVDCTLSLGTPSSRRAEPVAAA. Over residues 58-74 the composition is skewed to low complexity; sequence TVTTSPSSPSSSSTGSV. A GATA-type zinc finger spans residues 154-179; that stretch reads CANCGTASTPLWRNGPRGPKSLCNAC.

It belongs to the type IV zinc-finger family. Class B subfamily.

Probable transcription factor that regulates organogenesis during transition from the vegetative to the reproductive phase. Regulates the expression of CYP78A11/PLA1, HD3A and MADS1 during reproductive development in rice. May act upstream of CYP78A11/PLA1 during panicle development. Acts independently of the photoperiodic and gibberellin signaling pathways. The chain is GATA transcription factor 15 from Oryza sativa subsp. indica (Rice).